Consider the following 412-residue polypeptide: Argininosuccinate synthase (412 aa).

ATP contacts are provided by residues 10 to 18 (AYSGGLDTS) and alanine 36. Tyrosine 87 and serine 92 together coordinate L-citrulline. A Phosphotyrosine modification is found at tyrosine 87. The residue at position 112 (lysine 112) is an N6-acetyllysine. Tyrosine 113 is modified (phosphotyrosine). 115–123 (SHGATGKGN) is a binding site for ATP. Residues threonine 119, asparagine 123, and aspartate 124 each contribute to the L-aspartate site. Residue asparagine 123 coordinates L-citrulline. Arginine 127 contributes to the L-citrulline binding site. N6-acetyllysine; by CLOCK occurs at positions 165 and 176. 2 residues coordinate L-citrulline: serine 180 and serine 189. Serine 180 carries the post-translational modification Phosphoserine. At serine 219 the chain carries Phosphoserine. L-citrulline contacts are provided by glutamate 270 and tyrosine 282.

The protein belongs to the argininosuccinate synthase family. Type 1 subfamily. In terms of assembly, homotetramer. Interacts with NMRAL1. Interacts with CLOCK; in a circadian manner. Forms tissue-specific complexes with ASL, SLC7A1, HSP90AA1 and nitric oxide synthase NOS1, NOS2 or NOS3; the complex regulates cell-autonomous L-arginine synthesis and citrulline recycling while channeling extracellular L-arginine to nitric oxide synthesis pathway. Post-translationally, acetylated by CLOCK in a circadian manner which negatively regulates its enzyme activity. Deacetylated by histone deacetylases.

The protein localises to the cytoplasm. The protein resides in the cytosol. It carries out the reaction L-citrulline + L-aspartate + ATP = 2-(N(omega)-L-arginino)succinate + AMP + diphosphate + H(+). The protein operates within amino-acid biosynthesis; L-arginine biosynthesis; L-arginine from L-ornithine and carbamoyl phosphate: step 2/3. It participates in nitrogen metabolism; urea cycle; (N(omega)-L-arginino)succinate from L-aspartate and L-citrulline: step 1/1. One of the enzymes of the urea cycle, the metabolic pathway transforming neurotoxic amonia produced by protein catabolism into inocuous urea in the liver of ureotelic animals. Catalyzes the formation of arginosuccinate from aspartate, citrulline and ATP and together with ASL it is responsible for the biosynthesis of arginine in most body tissues. The protein is Argininosuccinate synthase of Bos taurus (Bovine).